Here is a 406-residue protein sequence, read N- to C-terminus: uncharacterized protein (406 aa).

The next 10 membrane-spanning stretches (helical) occupy residues 7-27 (SILF…MVVI), 43-63 (VTLI…LITI), 69-89 (LTII…FYAL), 98-118 (LILV…FSPL), 155-175 (GLII…FLLF), 220-240 (IIIM…SVSL), 253-273 (WWGF…FIIY), 297-317 (LTLI…VLFM), 352-372 (VQFI…FLGV), and 374-394 (LVYV…FSQL).

This sequence belongs to the major facilitator superfamily.

It is found in the cell membrane. This is an uncharacterized protein from Bacillus subtilis (strain 168).